The chain runs to 365 residues: Chorismate synthase (365 aa).

Positions 48 and 54 each coordinate NADP(+). Residues 125-127 (RSS), 238-239 (NA), glycine 278, 293-297 (KPTSS), and arginine 319 contribute to the FMN site.

Belongs to the chorismate synthase family. In terms of assembly, homotetramer. The cofactor is FMNH2.

The enzyme catalyses 5-O-(1-carboxyvinyl)-3-phosphoshikimate = chorismate + phosphate. It functions in the pathway metabolic intermediate biosynthesis; chorismate biosynthesis; chorismate from D-erythrose 4-phosphate and phosphoenolpyruvate: step 7/7. Functionally, catalyzes the anti-1,4-elimination of the C-3 phosphate and the C-6 proR hydrogen from 5-enolpyruvylshikimate-3-phosphate (EPSP) to yield chorismate, which is the branch point compound that serves as the starting substrate for the three terminal pathways of aromatic amino acid biosynthesis. This reaction introduces a second double bond into the aromatic ring system. The protein is Chorismate synthase of Vesicomyosocius okutanii subsp. Calyptogena okutanii (strain HA).